The following is a 1099-amino-acid chain: Solute carrier family 12 member 1 (1099 aa).

Residues 1-177 lie on the Cytoplasmic side of the membrane; that stretch reads MSLNNSSNVF…EDDQAGVVKF (177 aa). Positions 20-23 match the RFXV motif motif; the sequence is RFQV. Residues 31-53 are disordered; it reads ESSAAADDNTDPPHYEETSFGDE. At Ser-61 the chain carries Phosphoserine. Ser-91 carries the phosphoserine; by OXSR1 and STK39 modification. Residue Thr-95 is modified to Phosphothreonine. Thr-100 and Thr-105 each carry phosphothreonine; by OXSR1 and STK39. Thr-118 carries the post-translational modification Phosphothreonine. Ser-120 carries the post-translational modification Phosphoserine. Phosphoserine; by AMPK is present on Ser-130. The residue at position 148 (Ser-148) is a Phosphoserine. Residues 178–198 form a helical membrane-spanning segment; that stretch reads GWVKGVLVRCMLNIWGVMLFI. Residues 199-201 are Extracellular-facing; that stretch reads RLS. A helical membrane pass occupies residues 202–222; the sequence is WIVGEAGIGLGVLIILLSTMV. The Cytoplasmic portion of the chain corresponds to 223–259; sequence TSITGLSTSAIATNGFVRGGGAYYLISRSLGPEFGGS. The helical transmembrane segment at 260-280 threads the bilayer; sequence IGLIFAFANAVAVAMYVVGFA. Residues 281 to 302 lie on the Extracellular side of the membrane; that stretch reads ETVVDLLKESDSMMVDPTNDIR. Residues 303–323 form a helical membrane-spanning segment; the sequence is IIGSITVVILLGISVAGMEWE. Residues 324–327 are Cytoplasmic-facing; that stretch reads AKAQ. A helical membrane pass occupies residues 328–348; the sequence is VILLVILLIAIANFFIGTVIP. Residues 349–379 lie on the Extracellular side of the membrane; it reads SNNEKKSRGFFNYQASIFAENFGPRFTKGEG. The chain crosses the membrane as a helical span at residues 380 to 400; that stretch reads FFSVFAIFFPAATGILAGANI. The Cytoplasmic portion of the chain corresponds to 401–417; it reads SGDLEDPQDAIPRGTML. A helical transmembrane segment spans residues 418–438; it reads AIFITTVAYLGVAICVGACVV. The Extracellular segment spans residues 439 to 550; that stretch reads RDATGNMNDT…NNEPLRGYIL (112 aa). Residues Asn-446 and Asn-456 are each glycosylated (N-linked (GlcNAc...) asparagine). A run of 2 helical transmembrane segments spans residues 551 to 571 and 572 to 592; these read TFLIAMAFILIAELNTIAPII and SNFFLASYALINFSCFHASYA. The Extracellular portion of the chain corresponds to 593 to 609; it reads KSPGWRPAYGIYNMWVS. The helical transmembrane segment at 610–630 threads the bilayer; the sequence is LFGAVLCCAVMFVINWWAAVI. Residues 631–1099 are Cytoplasmic-facing; that stretch reads TYVIEFFLYV…NHKNVLTFYS (469 aa).

It belongs to the SLC12A transporter family. As to quaternary structure, when phosphorylated, interacts with PPP3CB. In terms of processing, phosphorylated at Ser-91, Thr-100 and Thr-105 by OXSR1/OSR1 and STK39/SPAK downstream of WNK kinases (WNK1, WNK2, WNK3 or WNK4), promoting its activity. In terms of tissue distribution, kidney; localizes to the thick ascending limbs (at protein level).

The protein resides in the apical cell membrane. The catalysed reaction is K(+)(out) + 2 chloride(out) + Na(+)(out) = K(+)(in) + 2 chloride(in) + Na(+)(in). Activated following phosphorylation by OXSR1/OSR1 and STK39/SPAK downstream of WNK kinases (WNK1, WNK2, WNK3 or WNK4). Renal sodium, potassium and chloride ion cotransporter that mediates the transepithelial NaCl reabsorption in the thick ascending limb and plays an essential role in the urinary concentration and volume regulation. Electrically silent transporter system. The polypeptide is Solute carrier family 12 member 1 (SLC12A1) (Homo sapiens (Human)).